Here is a 168-residue protein sequence, read N- to C-terminus: Protein-export protein SecB (168 aa).

It belongs to the SecB family. As to quaternary structure, homotetramer, a dimer of dimers. One homotetramer interacts with 1 SecA dimer.

It localises to the cytoplasm. Its function is as follows. One of the proteins required for the normal export of preproteins out of the cell cytoplasm. It is a molecular chaperone that binds to a subset of precursor proteins, maintaining them in a translocation-competent state. It also specifically binds to its receptor SecA. The sequence is that of Protein-export protein SecB from Sinorhizobium medicae (strain WSM419) (Ensifer medicae).